We begin with the raw amino-acid sequence, 306 residues long: Methionyl-tRNA formyltransferase (306 aa).

Serine 108 to proline 111 serves as a coordination point for (6S)-5,6,7,8-tetrahydrofolate.

It belongs to the Fmt family.

It carries out the reaction L-methionyl-tRNA(fMet) + (6R)-10-formyltetrahydrofolate = N-formyl-L-methionyl-tRNA(fMet) + (6S)-5,6,7,8-tetrahydrofolate + H(+). In terms of biological role, attaches a formyl group to the free amino group of methionyl-tRNA(fMet). The formyl group appears to play a dual role in the initiator identity of N-formylmethionyl-tRNA by promoting its recognition by IF2 and preventing the misappropriation of this tRNA by the elongation apparatus. This chain is Methionyl-tRNA formyltransferase, found in Paenarthrobacter aurescens (strain TC1).